A 307-amino-acid polypeptide reads, in one-letter code: Ornithine carbamoyltransferase (307 aa).

Carbamoyl phosphate-binding positions include 53–56, glutamine 80, arginine 104, and 131–134; these read STRT and HPCQ. L-ornithine contacts are provided by residues asparagine 162, aspartate 220, and 224-225; that span reads SM. Carbamoyl phosphate contacts are provided by residues 260-261 and arginine 288; that span reads CL.

The protein belongs to the aspartate/ornithine carbamoyltransferase superfamily. OTCase family.

The protein localises to the cytoplasm. The enzyme catalyses carbamoyl phosphate + L-ornithine = L-citrulline + phosphate + H(+). The protein operates within amino-acid biosynthesis; L-arginine biosynthesis; L-arginine from L-ornithine and carbamoyl phosphate: step 1/3. Its function is as follows. Reversibly catalyzes the transfer of the carbamoyl group from carbamoyl phosphate (CP) to the N(epsilon) atom of ornithine (ORN) to produce L-citrulline. In Nitrosomonas eutropha (strain DSM 101675 / C91 / Nm57), this protein is Ornithine carbamoyltransferase.